Consider the following 446-residue polypeptide: Methionine aminopeptidase 2-3 (446 aa).

The tract at residues Ile-14–Glu-116 is disordered. Basic residues predominate over residues Ala-61 to Pro-76. A compositionally biased stretch (polar residues) spans Pro-86 to Tyr-96. The segment covering Lys-98 to Glu-116 has biased composition (basic and acidic residues). A substrate-binding site is contributed by His-199. A divalent metal cation is bound by residues Asp-219, Asp-230, and His-299. His-307 lines the substrate pocket. Residues Glu-332 and Glu-427 each coordinate a divalent metal cation.

Belongs to the peptidase M24A family. Methionine aminopeptidase eukaryotic type 2 subfamily. It depends on Co(2+) as a cofactor. The cofactor is Zn(2+). Mn(2+) is required as a cofactor. Fe(2+) serves as cofactor.

It is found in the cytoplasm. It carries out the reaction Release of N-terminal amino acids, preferentially methionine, from peptides and arylamides.. Its function is as follows. Cotranslationally removes the N-terminal methionine from nascent proteins. The N-terminal methionine is often cleaved when the second residue in the primary sequence is small and uncharged (Met-Ala-, Cys, Gly, Pro, Ser, Thr, or Val). In Aspergillus fumigatus (strain CBS 144.89 / FGSC A1163 / CEA10) (Neosartorya fumigata), this protein is Methionine aminopeptidase 2-3.